We begin with the raw amino-acid sequence, 127 residues long: Ribosome-binding factor A (127 aa).

It belongs to the RbfA family. In terms of assembly, monomer. Binds 30S ribosomal subunits, but not 50S ribosomal subunits or 70S ribosomes.

It localises to the cytoplasm. In terms of biological role, one of several proteins that assist in the late maturation steps of the functional core of the 30S ribosomal subunit. Associates with free 30S ribosomal subunits (but not with 30S subunits that are part of 70S ribosomes or polysomes). Required for efficient processing of 16S rRNA. May interact with the 5'-terminal helix region of 16S rRNA. The chain is Ribosome-binding factor A from Glaesserella parasuis serovar 5 (strain SH0165) (Haemophilus parasuis).